Here is a 133-residue protein sequence, read N- to C-terminus: Large ribosomal subunit protein bL17 (133 aa).

It belongs to the bacterial ribosomal protein bL17 family. As to quaternary structure, part of the 50S ribosomal subunit. Contacts protein L32.

This chain is Large ribosomal subunit protein bL17, found in Ehrlichia chaffeensis (strain ATCC CRL-10679 / Arkansas).